The primary structure comprises 380 residues: MKHLTEEQKLTLDMVRDVATREIAPRALELDEKSLFPEYARDLFAKLGLLNPLLPAAYGGTEMGVLTLALILEELGRVCASTALLLIAQTDGMLPIIHGGSPELKERYLRRFAGESTLLTALAATEPAAGSDLLAMKTRAVRQGDKYVINGQKCFITNGSVADVIVVYAYTDPEKGSKGISAFVVEKGTPGLVYGRNESKMGMRGSINSELFFENMEVPAENIIGAEGTGFANLMQTLSTNRVFCAAQAVGIAQGALDIAVRHTQDRVQFGKPIAHLAPVQFMVADMATAVEASRLLTRKAAELLDDGDKKAVLYGSMAKTMASDTAMRVTTDAVQVLGGSGYMKENGVERMMRDAKLTQIYTGTNQITRMVTGRALLFP.

D91 functions as the Proton acceptor in the catalytic mechanism. The FAD site is built by L122, A124, T125, S131, and T157. S131 contributes to the cyclohex-1-ene-1-carbonyl-CoA binding site. A cyclohexa-1,5-diene-1-carbonyl-CoA-binding site is contributed by S131. Positions 178, 242, and 363 each coordinate cyclohex-1-ene-1-carbonyl-CoA. Cyclohexa-1,5-diene-1-carbonyl-CoA contacts are provided by K178, R242, and T363. 2 residues coordinate FAD: T365 and Q367. R375 lines the cyclohex-1-ene-1-carbonyl-CoA pocket. R375 is a cyclohexa-1,5-diene-1-carbonyl-CoA binding site.

It belongs to the acyl-CoA dehydrogenase family. As to quaternary structure, homotetramer. Requires FAD as cofactor.

The catalysed reaction is cyclohex-1-ene-1-carbonyl-CoA + oxidized [electron-transfer flavoprotein] + H(+) = cyclohexa-1,5-diene-1-carbonyl-CoA + reduced [electron-transfer flavoprotein]. In terms of biological role, acyl-CoA dehydrogenase involved in the anaerobic degradation of cyclohexane carboxylic acid (CHC). Catalyzes the 1,4-dehydrogenation at C3 and C6 of cyclohex-1-ene-1-carbonyl-CoA (CHeneCoA or Ch1CoA) to cyclohexa-1,5-diene-1-carbonyl-CoA (CHdieneCoA or Ch1,5CoA). Also able to catalyze, at a lower rate, the dehydrogenation at C3 and C4 of CHdieneCoA to benzoyl-CoA. The protein is Cyclohex-1-ene-1-carbonyl-CoA dehydrogenase of Geobacter metallireducens (strain ATCC 53774 / DSM 7210 / GS-15).